A 58-amino-acid polypeptide reads, in one-letter code: ATP synthase subunit a (58 aa).

The next 2 membrane-spanning stretches (helical) occupy residues E11–L31 and V35–I55.

The protein belongs to the ATPase A chain family. F-type ATPases have 2 components, CF(1) - the catalytic core - and CF(0) - the membrane proton channel. CF(1) has five subunits: alpha(3), beta(3), gamma(1), delta(1), epsilon(1). CF(0) has three main subunits: a, b and c.

The protein localises to the mitochondrion inner membrane. Its function is as follows. Mitochondrial membrane ATP synthase (F(1)F(0) ATP synthase or Complex V) produces ATP from ADP in the presence of a proton gradient across the membrane which is generated by electron transport complexes of the respiratory chain. F-type ATPases consist of two structural domains, F(1) - containing the extramembraneous catalytic core and F(0) - containing the membrane proton channel, linked together by a central stalk and a peripheral stalk. During catalysis, ATP synthesis in the catalytic domain of F(1) is coupled via a rotary mechanism of the central stalk subunits to proton translocation. Key component of the proton channel; it may play a direct role in the translocation of protons across the membrane. This chain is ATP synthase subunit a (ATP6), found in Brassica tournefortii (Wild turnip).